A 5488-amino-acid chain; its full sequence is MKRQLKSPLSEGQKGLWMLQKMSPGMSAYNIPLCFRFSKPIHAETFKKALLFVQRQYPVLASVIQEENGIPFQSVQLSKDLYFVEEDISAMKSADIMPFLKEKAKEPFQLEAGPLWRTHLFHRLEECIVLITIHHIIFDGVSMLTLISALFEAYQQLLNGIEPLQQPSTADYYDFVDWENRMLTGREGEEHLAYWKEQLSGSLPVLDLPADRPRSSARKFKGQAYKSLLPHHLRNQIKSFARTNHVNESVVFLSIYKVLLHHYTKQKDIIVGVPTMGRQEDRFETLIGYFINMMAVRSKNIGSQPLTAFIRELQLTVAVGLDHAAFPFPALVRELNVDRSAADSPVFQTAFLYQNFFQATGLQKVLEPYQTLGIEYIEDIRQEGEFELALEIYEQENETVLHLLYNPDLYELSSIESMMENYMKLAQHMMEDPSLPLEAYSLQLNQEQTSLLEQWNATGTNIANDKCIHEVFEEKAKQTPDAVAVMFEDRSLTYKEVDEKSTSVAVYLQHQGVRPEQPVGICAERSFDMIIGILGILKAGGAYVPLDPSFPQERLKYMLKDSQASIVLTQPNVHDRISGLTGSHVKAINIELACRNGYTDQQSSGLKREVKPEHLAYIIYTSGSTGEPKGVMVEHRSIMNTLNFLESHYPVTAEDAYLLKTNYVFDVSISELFGWFIGDGRLVILPPNGEKSPQLCMDYIETYKVTHINFVPAMLHVFLEMAKDNKRFTEDGPLKYMMVAGEAFPKVLVKKAVSLFTNCRVENIYGPTEASIYAAYFGCGKGDIASHHTPIGKPVSNTKIYIVDQHLKPVPIGKPGELCIAGAGLARGYFKKPGLTAEKFIDNPFESGTKLYKSGDSARWLPDGNIEYLGRIDSQVKIRGFRVELGAIETKLGEFPGILDQAVVVKQLEGHQQLAAYYTEESGHASANPKDLRLHLKSSLPEYMIPSHFIRLDELPLSPSGKVNRKELEKREIVFNRRKPNHLQLTEIEDQVLRIWEETLKVSGFGPEDGFFDAGGDSLLAVAVAERIKKEFDCEFHVTELFEYSTIRAISEYILEMKNSDLAGTQNEDDHDDKKDGKYPKQKIPPYFDDSVAIVGISCQFPGAKNHHDFWNHIKEGKESIRFFSEEELRANGVPEELIQHPDYVPVQSVIEGKDLFDPGFFQISPKDAEYMDPQLRLLLLHSWKAIEDAGYVAKEIPATSVYMSASSNSYRTLLPKETTEGHESPDGYVSWVLAQSGTIPTMISHKLGLKGPSYFVHSNCSSSLVGLYQAYKSLTSGESQYALVGGATLHAQSAIGYVHQNGLNFSSDGHVKAFDASADGMAGGEGVAVILLKKAVDAVKDGDHIYAIMRGIGINNDGAEKAGFYAPSVKGQTEVIQHVLDTTKIHPETVSYIEAHGTGTKLGDPIEMSALNKVYKQYTDKTQFCGIGSVKTNIGHLDTAAGLAGCIKVAMSLYHNELAPTINCTEPNPDIKFESSPFYVVRERKSLEKHAGVHRAALSSFGLGGTNAHAIFEQYENISDAGAENEGNQPYIIPISAKNSERLQVYAKEMLSYISQDEQRHFSLRDIAYTFQVGREAMDNRIVFIVNDLEEWKHQLEAFVTGKPLAEGCIQGEKTRMTSAEQLLGNAEADDMASSRISKEELRKLAEMWANGFHVEWRRLYPNIKPRRISLPTYPFAEERYWPESSTGAITTIEPSRLHPLVHHNTSVLSEQRFSSIFTGQEYFIAEHIIKGMAILPAAVTLEMARAAIEQGIGGLEDHETGIRLKNVVWVRPVVAGSEPVQVNIGLYDEDGGHIAYRMYGDPESADAEPVVYNQGKAELIQLKREKALDLSKIKKQCDQSKMDAASFYEGMIGADYGPGYKSVEAVYKGDGQLLAKLSLPESVAHTLGDYVLHPSVMDGALQAAEYLQNVVRAELSDTEDFKAALPFALEELEVFRQCVSDMWVYVQFNSKNKPGDLIQKVDIHLCDEHGMICVRLKGFSTRVMEADIQTEPSKINAETLLLQPVWQEQKAANSLAAKKYAEHLVFLCEYDHETRKQIEAAIEDVHVYSLEARPSSVDGRFHSYTEQVFKKVQEIIRTKPKDGILVQIVTSAEGEQQLFSGLTGLLKTACQENAKLTGQMIEVSSEESGESIAGKLLENQMSSDSYVKYQNGTRYIADWREIKQAKGDGSKPWKDNGVYLISGGAGGLGHIFAKEIAEQTKNATVILAGRSPLSESKSKKLKELHSKGADITYRQTDVTNKIEVYQLIDDIQKRYGRLNGILHSAGIIKDSYLVNKQAKDLHDVLAPKVKGLVYLDEASKDLPLDFFILFSSLSGSLGSIGQSDYAAANVFMDMYAGYRNRLADLSQRHGQTLSVNWPLWRDGGMQVDQETEKRLVQLAGIVPMRAEKGIQALYQALHSEANQVMVIEGDVQKIKQNMLAKNASAPMEKKEAEHMTEQINSIDADSLLDKVKAMLKREIAKLLKVKLETIDDHAEMTVYGFDSISMTEFTNHINRAYQLELTPTVFFDHPTIHAFGKHLSEEYQSVFAKTFAVRAVSAQLQPAAKQEQAVRAKAKRRRKQQVMLPNAIQSDAGPEPIAIVGISGIFPMAKDVEAYWNILKEGKDCMTEIPKDRWDWREYEGDPAKEVNKTNVKWGGFIDGIADFDPLFFGISPREAEQMEPQQRLLLTYAWKAIEDAGYSAKRLSGTKTGVFIGTGNTGYSSLLSKANSAIEGSAAANTSPSVGPNRVSYFLNLHGPSEPVDTACSSSLVAIHHAISSIEEGTCDMALAGGVNTIILPEVYISFDKAGALSKEGKCKTFSNQADGFAHGEGAGILFLKKLKAAEEAGDHIYGVIKGSAINHGGRAASLTTPNPKAQADVIQSAYQKAGIDPKTVTYIEAHGTGTELGDPVEINGLKSAFKALGVNEGDTSANPYCGLGSVKTNIGHLSLAAGAAGVIKILLQLKHKTLVKSLHCENVNPYIQLKNSPFYIVRETEEWKALKNEQGEELPRRAGVSSFGIGGVNAHVIIEEYIPEASDENIPSIAPEHPGIFVLSAKNEARLKEHAQQLADALDKQTYSDVNLARIAYTLQAGRDAMEERLGIISGSIEDLQKKLKDFAAEKSGVEDVFKGRIDKGTLQMLTEDEEIQEAVEKWMERGKYAKLLELWVKGLDVDWTKLYGENLPKRISLPTYPFAKDRYWISDHIEKSGSIDANQAASRLGGAVLHPLMHQNTSNLSEQRFSSIYTGEEFFLADHVVKGQRILPGVAHLELARAAVEQAAEVQGVPRIMKLKNAVWVRPIVVEDQPQQVHIRLLPGENGEISYEIYGHSDVTGEQSIVYSQGSAVLNPAENLPAVDLQSLREQCQESHFSVNEVYDTYRMIGFEYGPAYRGVKKIYTAEQFVLAKLSLHPSAADTLSQYKMHPGLMDSALQASSILTGAGDNQLTLPFAVQELEVFGACSSEMWVYARYSQGSKATDKVQKRDMDILDESGNVCVRMKGLSFRAAEGGSGSAESDQTLATLMFEEKWVPKDFKKESPEPHYERHIVMLCDMNGLSKDRIESRMTGAECIVLESFREGLAERFQDYAEQALETVQGLLKSRPQGNVLIQLLTSAQRKQYSFSGLSALLKTAGLENKKLIGQTIEIDSHENVESVIEKLKENKRHTEDQHIKYEKGKRYINDLDEMQIDDREISMPWRDKGVYLITGGAGGLGFIFAKEIARQAEQPVLILTGRSALNADQQAELNELQQLGARAEYRQVDVTQTEAASELITSITSDYEDLNGVIHSAGLIKDNYLMSKTNEELTQVLAPKVKGLVNVDEATEHLALDFFILFSSISSVAGSAGQADYAMANAFMDSYAAYRNALVTAMYRHGQTLSINWPLWKEGGMRANKEIENMTLKNTGVTPMRTETGIQALYKGLAFGKDQVIVMEGFKDMMREKLTQKPSSDDVPMKTVQVRVTSEARMDQGNMFDHIQEVLKQTISQLLKIKPEEIDPDMEFNQYGFDSITLTEFANTLNEKCKLDLTPTVFFEHATVYAFAGYLSEEYPNAFTAQTPAKAEVLMQPVEQNIKNMTFSTENRFVKPSVTPMQKEADHKPEPIAIVGMSGVFPKAKDVEEYWKNLSSGADCITEVPKDRWDWQEYYGDPLKEANKTNVKWGGFIDEVADFDPLFFGISPLEAEQMEPQQRLLMTYAWKAVEEAGHSARSLAGTKTGIFIGTGNTGYSSLLSNVDIEGSAAANMSPSAGPNRVSYFLNIHGPSEPIDTACSSSLVAIHHAVCAIENGNCEMAIAGGVNTVVTPQGHIAYDKAGALSKEGRCKTFSDKADGFAVSEGAGILFLKKLTAAERDGDHIYGVIKGSAVNHGGRANSLTTPNPKAQADVVKTAYEKAGIDPRTVTYIEAHGTGTELGDPVEINGLKAAFKELYEKTGDPAVHGSHCGLGSAKTNIGHLSLAAGVAGVIKVLLQLKHKTLVKSLYSETVNPYIRLDDSPFYIVQESREWQALRDEAGRELPRRAGISSFGIGGVNAHVVIEEYIPKETTHPATAPAVTAQHPGIFILSAKDEDRLKDQARQLADFISKRSITARDLTDIAYTLQEGRDAMEERLGIIAVSTGDLLEKLNLFIEGGTNAKYMYRGRAEKGIAQTLRSDDEVQKTLNNSWEPHIYERLLDLWVKGMEIGWSKLYDGKQPKRISLPTYPFAKERYWITDTKEEAAAHQTALKTVESAALHPLIHVNTSDLSEQRFSSAFTGAEFFFADHKVKGKPVMPGVAYLEMVHAAVTRAVRRTEDQQSVIHIKNVVWVQPIVADGQPVQVDISLNPQQDGEIAFNVYTEAAHNDRKIHCQGSASIRGAGDIPVQDISALQDQCSLSTLSHDQCYELFKAIGIDYGPGFQGIDRLYIGRNQALAELSLPAGVTHTLNEFVLHPSMADSALQASIGLKLNSGDEQLSLPFALQELEIFSPCTNKMWVSVTSRPNEDKIQRLDIDLCDEQGRVCVRIKGITSRLLEEGIQPPDGPTSLGNSKATLNGALLMAPIWDRVQLEKRSISPADERVVILGGDDNSRKAVQREFPFAKELYIEPNASIHRITGQLEALGSFDHIVWMSPSRVTECEVGDEMIEAQDQGVIQMYRLIKAMLSLGYGQKEISWTIVTVNTQYVDQHDIVDPVDAGVHGLIGSMSKEYPNWQTKLIDVKKYEDLPLSQLLSLPADQEGNTWAYRNKIWHKLRLIPVHNNQPVHTKYKHGGVYVVIGGAGGIGEAWSEYMIRTYQAQIVWIGRRKKDAAIQSKLDRFARLGRAPYYIQADAANREELERAYETMKQTHREINGIIHSAIVLQDRSLMNMSEECFRNVLAAKVDVSVRMAQVFRHEPLDFVLFFSSVQSFARASGQSNYAAGCSFKDAFAQRLSQVWPCTVAVMNWSYWGSIGVVSSPDYQKRMAQAGIGSIEAPEAMEALELLLGGPLKQLVMMKMANETNDEAEQTEETIEVYPETHGSAIQKLRSYHPGDNTKIQQLL.

The tract at residues 3–301 (RQLKSPLSEG…NMMAVRSKNI (299 aa)) is condensation. A WD 1 repeat occupies 165–205 (QQPSTADYYDFVDWENRMLTGREGEEHLAYWKEQLSGSLPV). Residues 493 to 903 (TYKEVDEKST…EFPGILDQAV (411 aa)) are adenylation. The WD 2 repeat unit spans residues 965-1006 (RKELEKREIVFNRRKPNHLQLTEIEDQVLRIWEETLKVSGFG). Residues 983–1058 (LQLTEIEDQV…AISEYILEMK (76 aa)) enclose the Carrier 1 domain. Serine 1018 is modified (O-(pantetheine 4'-phosphoryl)serine). The Ketosynthase family 3 (KS3) 1 domain occupies 1089–1515 (DDSVAIVGIS…GTNAHAIFEQ (427 aa)). Active-site for beta-ketoacyl synthase 1 activity residues include cysteine 1261, histidine 1397, and histidine 1437. An N-terminal hotdog fold 1 region spans residues 1700–1826 (HPLVHHNTSV…GKAELIQLKR (127 aa)). The 293-residue stretch at 1700-1992 (HPLVHHNTSV…TRVMEADIQT (293 aa)) folds into the PKS/mFAS DH 1 domain. The active-site Proton acceptor; for dehydratase activity 1 is histidine 1729. A C-terminal hotdog fold 1 region spans residues 1840 to 1992 (DQSKMDAASF…TRVMEADIQT (153 aa)). Aspartate 1900 acts as the Proton donor; for dehydratase activity 1 in catalysis. The WD 3 repeat unit spans residues 2165–2204 (KQAKGDGSKPWKDNGVYLISGGAGGLGHIFAKEIAEQTKN). Residues 2448 to 2525 (SLLDKVKAML…AFGKHLSEEY (78 aa)) enclose the Carrier 2 domain. Serine 2485 is modified (O-(pantetheine 4'-phosphoryl)serine). In terms of domain architecture, Ketosynthase family 3 (KS3) 2 spans 2576–3012 (PEPIAIVGIS…GVNAHVIIEE (437 aa)). Active-site for beta-ketoacyl synthase 2 activity residues include cysteine 2747, histidine 2882, and histidine 2928. Residues 3038-3109 (KNEARLKEHA…AAEKSGVEDV (72 aa)) are a coiled coil. Residues 3207–3332 (HPLMHQNTSN…GSAVLNPAEN (126 aa)) are N-terminal hotdog fold 2. In terms of domain architecture, PKS/mFAS DH 2 spans 3207-3492 (HPLMHQNTSN…FRAAEGGSGS (286 aa)). Histidine 3236 serves as the catalytic Proton acceptor; for dehydratase activity 2. Positions 3346–3492 (QESHFSVNEV…FRAAEGGSGS (147 aa)) are C-terminal hotdog fold 2. Aspartate 3408 (proton donor; for dehydratase activity 2) is an active-site residue. Residues 3626–3655 (DSHENVESVIEKLKENKRHTEDQHIKYEKG) are a coiled coil. A WD 4 repeat occupies 3666 to 3705 (QIDDREISMPWRDKGVYLITGGAGGLGFIFAKEIARQAEQ). Residues 3952–4026 (DHIQEVLKQT…AFAGYLSEEY (75 aa)) enclose the Carrier 3 domain. At serine 3986 the chain carries O-(pantetheine 4'-phosphoryl)serine. Positions 4076 to 4511 (PEPIAIVGMS…GVNAHVVIEE (436 aa)) constitute a Ketosynthase family 3 (KS3) 3 domain. Catalysis depends on for beta-ketoacyl synthase 3 activity residues cysteine 4245, histidine 4380, and histidine 4427. The N-terminal hotdog fold 3 stretch occupies residues 4706-4830 (HPLIHVNTSD…GSASIRGAGD (125 aa)). The region spanning 4706–4988 (HPLIHVNTSD…SRLLEEGIQP (283 aa)) is the PKS/mFAS DH 3 domain. Histidine 4735 acts as the Proton acceptor; for dehydratase activity 3 in catalysis. The interval 4844–4988 (SLSTLSHDQC…SRLLEEGIQP (145 aa)) is C-terminal hotdog fold 3. The active-site Proton donor; for dehydratase activity 3 is the aspartate 4906. One copy of the WD 5 repeat lies at 5206 to 5244 (HNNQPVHTKYKHGGVYVVIGGAGGIGEAWSEYMIRTYQA). Residues 5275-5303 (IQADAANREELERAYETMKQTHREINGII) adopt a coiled-coil conformation.

It belongs to the ATP-dependent AMP-binding enzyme family. It depends on pantetheine 4'-phosphate as a cofactor.

Its subcellular location is the cytoplasm. It participates in antibiotic biosynthesis; bacillaene biosynthesis. Its function is as follows. Involved in some intermediate steps for the synthesis of the antibiotic polyketide bacillaene which is involved in secondary metabolism. In Bacillus subtilis (strain 168), this protein is Polyketide synthase PksN (pksN).